The following is a 419-amino-acid chain: UDP-N-acetylglucosamine 1-carboxyvinyltransferase (419 aa).

22–23 (KN) lines the phosphoenolpyruvate pocket. Residue arginine 95 participates in UDP-N-acetyl-alpha-D-glucosamine binding. Cysteine 119 (proton donor) is an active-site residue. Cysteine 119 bears the 2-(S-cysteinyl)pyruvic acid O-phosphothioketal mark. Residues 164 to 167 (KVSV), aspartate 308, and isoleucine 330 contribute to the UDP-N-acetyl-alpha-D-glucosamine site.

It belongs to the EPSP synthase family. MurA subfamily.

The protein resides in the cytoplasm. The enzyme catalyses phosphoenolpyruvate + UDP-N-acetyl-alpha-D-glucosamine = UDP-N-acetyl-3-O-(1-carboxyvinyl)-alpha-D-glucosamine + phosphate. It functions in the pathway cell wall biogenesis; peptidoglycan biosynthesis. Functionally, cell wall formation. Adds enolpyruvyl to UDP-N-acetylglucosamine. The chain is UDP-N-acetylglucosamine 1-carboxyvinyltransferase from Rickettsia akari (strain Hartford).